Here is a 251-residue protein sequence, read N- to C-terminus: B3 domain-containing protein REM7 (251 aa).

2 consecutive DNA-binding regions (TF-B3) follow at residues 11-103 and 170-251; these read NSHF…LGPS and CFVA…SRLN.

It localises to the nucleus. The polypeptide is B3 domain-containing protein REM7 (REM7) (Arabidopsis thaliana (Mouse-ear cress)).